The primary structure comprises 466 residues: Acetyl-coenzyme A carboxylase carboxyl transferase subunit beta, chloroplastic (466 aa).

Residues 198–466 form the CoA carboxyltransferase N-terminal domain; the sequence is LWIQCENCYE…FPLNQNSIGQ (269 aa). The Zn(2+) site is built by C202, C205, C221, and C224. The C4-type zinc-finger motif lies at 202 to 224; that stretch reads CENCYELNYKKLLKSKMRICDEC.

Belongs to the AccD/PCCB family. In terms of assembly, acetyl-CoA carboxylase is a heterohexamer composed of biotin carboxyl carrier protein, biotin carboxylase and 2 subunits each of ACCase subunit alpha and ACCase plastid-coded subunit beta (accD). Requires Zn(2+) as cofactor.

The protein resides in the plastid. It localises to the chloroplast stroma. The enzyme catalyses N(6)-carboxybiotinyl-L-lysyl-[protein] + acetyl-CoA = N(6)-biotinyl-L-lysyl-[protein] + malonyl-CoA. It participates in lipid metabolism; malonyl-CoA biosynthesis; malonyl-CoA from acetyl-CoA: step 1/1. Component of the acetyl coenzyme A carboxylase (ACC) complex. Biotin carboxylase (BC) catalyzes the carboxylation of biotin on its carrier protein (BCCP) and then the CO(2) group is transferred by the transcarboxylase to acetyl-CoA to form malonyl-CoA. This chain is Acetyl-coenzyme A carboxylase carboxyl transferase subunit beta, chloroplastic, found in Fagopyrum esculentum subsp. ancestrale (Wild buckwheat).